The chain runs to 1274 residues: DENN domain-containing protein 5B (1274 aa).

Residue serine 2 is modified to N-acetylserine. Residues 39–244 (DELAGENFDQ…EVPLPPPGRS (206 aa)) enclose the uDENN domain. 2 positions are modified to phosphoserine: serine 49 and serine 178. One can recognise a cDENN domain in the interval 263–399 (ELPLSDYPLR…VDFIQELSEV (137 aa)). Residues 401-581 (LQFGIPPEGS…DNKIMSQWEE (181 aa)) enclose the dDENN domain. The 161-residue stretch at 772–932 (LEENTLIASL…DYFCFTSVFT (161 aa)) folds into the RUN 1 domain. Position 822 is a phosphoserine (serine 822). Residues 916 to 936 (LLSLNAVDYFCFTSVFTTIMI) form a helical membrane-spanning segment. Residues 936–1044 (IPYRSVIIPI…DDGSLERILI (109 aa)) form the PLAT domain. At threonine 1062 the chain carries Phosphothreonine. Phosphoserine occurs at positions 1068, 1076, and 1079. Residues 1118-1267 (TVLLCGENGL…QDFTIVLEGS (150 aa)) enclose the RUN 2 domain.

This sequence belongs to the RAB6IP1 family.

It is found in the membrane. Guanine nucleotide exchange factor (GEF) which may activate RAB39A and/or RAB39B. Promotes the exchange of GDP to GTP, converting inactive GDP-bound Rab proteins into their active GTP-bound form. The polypeptide is DENN domain-containing protein 5B (Dennd5b) (Mus musculus (Mouse)).